The chain runs to 156 residues: Cyanate hydratase (156 aa).

Active-site residues include Arg96, Glu99, and Ser122.

The protein belongs to the cyanase family.

It carries out the reaction cyanate + hydrogencarbonate + 3 H(+) = NH4(+) + 2 CO2. Functionally, catalyzes the reaction of cyanate with bicarbonate to produce ammonia and carbon dioxide. This Escherichia coli (strain K12 / DH10B) protein is Cyanate hydratase.